The sequence spans 173 residues: uncharacterized protein (173 aa).

The 118-residue stretch at 16 to 133 (DLVLRPETIT…KHVLIRFPNK (118 aa)) folds into the MSP domain. A compositionally biased stretch (basic and acidic residues) spans 141-163 (KKMEEDDMKQQKERNKLSNEKMG). Residues 141–173 (KKMEEDDMKQQKERNKLSNEKMGIRNQNMGEKK) form a disordered region.

This is an uncharacterized protein from Caenorhabditis elegans.